The sequence spans 414 residues: CinA-like protein (414 aa).

It belongs to the CinA family.

This chain is CinA-like protein, found in Citrifermentans bemidjiense (strain ATCC BAA-1014 / DSM 16622 / JCM 12645 / Bem) (Geobacter bemidjiensis).